Consider the following 138-residue polypeptide: ATP synthase epsilon chain (138 aa).

Residues 88–119 are disordered; it reads DREEARSTLSAAQARLDQSEQSEDKQERYEAQ. The span at 109 to 119 shows a compositional bias: basic and acidic residues; sequence SEDKQERYEAQ.

This sequence belongs to the ATPase epsilon chain family. F-type ATPases have 2 components, CF(1) - the catalytic core - and CF(0) - the membrane proton channel. CF(1) has five subunits: alpha(3), beta(3), gamma(1), delta(1), epsilon(1). CF(0) has three main subunits: a, b and c.

It is found in the cellular thylakoid membrane. Functionally, produces ATP from ADP in the presence of a proton gradient across the membrane. The protein is ATP synthase epsilon chain of Acaryochloris marina (strain MBIC 11017).